Consider the following 493-residue polypeptide: Probable cytosol aminopeptidase (493 aa).

Mn(2+) contacts are provided by Lys-258 and Asp-263. Lys-270 is an active-site residue. 3 residues coordinate Mn(2+): Asp-281, Asp-340, and Glu-342. Arg-344 is a catalytic residue.

The protein belongs to the peptidase M17 family. Mn(2+) is required as a cofactor.

Its subcellular location is the cytoplasm. It catalyses the reaction Release of an N-terminal amino acid, Xaa-|-Yaa-, in which Xaa is preferably Leu, but may be other amino acids including Pro although not Arg or Lys, and Yaa may be Pro. Amino acid amides and methyl esters are also readily hydrolyzed, but rates on arylamides are exceedingly low.. The enzyme catalyses Release of an N-terminal amino acid, preferentially leucine, but not glutamic or aspartic acids.. In terms of biological role, presumably involved in the processing and regular turnover of intracellular proteins. Catalyzes the removal of unsubstituted N-terminal amino acids from various peptides. This Caulobacter vibrioides (strain ATCC 19089 / CIP 103742 / CB 15) (Caulobacter crescentus) protein is Probable cytosol aminopeptidase.